Here is a 216-residue protein sequence, read N- to C-terminus: MTTPRMLWDISAPVHAGSPVFPGDTPYSQQWCATIGPQCPVNVSALAMSPHVGTHADAPLHYDPQGATIGDVPLDAFIGPCRVIHAIGRGPLVAWEHIAHALGADRPALPQRVLVRTYERMPLDRWDAALAAYAPDTIERLADLGVVLVGIDTASIDPADSKSLDSHQVIRRRGLRVLENLVLDEVPEGDYELIALPLKLTTADASPVRAVLRTPA.

A substrate-binding site is contributed by F21. Zn(2+) contacts are provided by H51, H55, and D57. Catalysis depends on H61, which acts as the Proton donor/acceptor. H167 and E179 together coordinate Zn(2+).

Belongs to the Cyclase 1 superfamily. KynB family. In terms of assembly, homodimer. Zn(2+) serves as cofactor.

The catalysed reaction is N-formyl-L-kynurenine + H2O = L-kynurenine + formate + H(+). The protein operates within amino-acid degradation; L-tryptophan degradation via kynurenine pathway; L-kynurenine from L-tryptophan: step 2/2. Functionally, catalyzes the hydrolysis of N-formyl-L-kynurenine to L-kynurenine, the second step in the kynurenine pathway of tryptophan degradation. This Paracidovorax citrulli (strain AAC00-1) (Acidovorax citrulli) protein is Kynurenine formamidase.